The following is a 428-amino-acid chain: Enolase (428 aa).

Gln-164 contacts (2R)-2-phosphoglycerate. The active-site Proton donor is Glu-208. Residues Asp-245, Glu-286, and Asp-313 each coordinate Mg(2+). (2R)-2-phosphoglycerate-binding residues include Lys-338, Arg-367, Ser-368, and Lys-389. Lys-338 functions as the Proton acceptor in the catalytic mechanism.

The protein belongs to the enolase family. Requires Mg(2+) as cofactor.

It is found in the cytoplasm. It localises to the secreted. The protein localises to the cell surface. The enzyme catalyses (2R)-2-phosphoglycerate = phosphoenolpyruvate + H2O. It participates in carbohydrate degradation; glycolysis; pyruvate from D-glyceraldehyde 3-phosphate: step 4/5. Functionally, catalyzes the reversible conversion of 2-phosphoglycerate (2-PG) into phosphoenolpyruvate (PEP). It is essential for the degradation of carbohydrates via glycolysis. The polypeptide is Enolase (Pyrococcus abyssi (strain GE5 / Orsay)).